The chain runs to 398 residues: MKINNLPEVFTAALPVLKEINEAGYEAYFVGGSVRDLLLNRHIHDVDIATSAYPMEIKQIFKKTIDTGIKHGTVTVLYEGESYEITTFRTESGYQDFRRPDHVTFVQNLSEDLKRRDFTINALAMDVDGNIIDHFDGLGDLEKHLIRAVGKAENRFHEDALRMMRAVRFMSQLQFTLEPETEQAISDNHELLSKISVERIRDEFVKMGIAPGSQKAFQIFLDTGLSEEVPGFRGKKENLALYPQLNFSPTTEANLWALMIILLKLPNDKIPHFMRMWKNSNAMERQVADIVAFFDLISSHAPNNYDLYKAGLETIVSTIDLAHILGQPVNGSALVDSYEALPIKNNRDLVIDGHFLLKNGIPAGPRVGLLLEEIKKAVLEGVISNNEAAITEFISLNH.

ATP-binding residues include Gly-32 and Arg-35. 2 residues coordinate CTP: Gly-32 and Arg-35. Mg(2+) contacts are provided by Asp-45 and Asp-47. ATP is bound by residues Arg-116, Asp-159, Arg-162, Arg-165, and Arg-168. CTP-binding residues include Arg-116, Asp-159, Arg-162, Arg-165, and Arg-168.

Belongs to the tRNA nucleotidyltransferase/poly(A) polymerase family. Bacterial CCA-adding enzyme type 3 subfamily. As to quaternary structure, homodimer. Mg(2+) serves as cofactor.

It catalyses the reaction a tRNA precursor + 2 CTP + ATP = a tRNA with a 3' CCA end + 3 diphosphate. The enzyme catalyses a tRNA with a 3' CCA end + 2 CTP + ATP = a tRNA with a 3' CCACCA end + 3 diphosphate. Catalyzes the addition and repair of the essential 3'-terminal CCA sequence in tRNAs without using a nucleic acid template. Adds these three nucleotides in the order of C, C, and A to the tRNA nucleotide-73, using CTP and ATP as substrates and producing inorganic pyrophosphate. tRNA 3'-terminal CCA addition is required both for tRNA processing and repair. Also involved in tRNA surveillance by mediating tandem CCA addition to generate a CCACCA at the 3' terminus of unstable tRNAs. While stable tRNAs receive only 3'-terminal CCA, unstable tRNAs are marked with CCACCA and rapidly degraded. This Lactobacillus johnsonii (strain CNCM I-12250 / La1 / NCC 533) protein is CCA-adding enzyme.